We begin with the raw amino-acid sequence, 772 residues long: Larval serum protein 1 gamma chain (772 aa).

The signal sequence occupies residues 1–16; that stretch reads MKLTLVILALVACVTA. N242 carries an N-linked (GlcNAc...) asparagine glycan.

The protein belongs to the hemocyanin family. As to quaternary structure, heterohexamer, composed of three subunits, alpha, beta and gamma. Larval hemolymph.

The protein localises to the secreted. It is found in the extracellular space. Its function is as follows. Larval storage protein (LSP) which may serve as a store of amino acids for synthesis of adult proteins. This chain is Larval serum protein 1 gamma chain (Lsp1gamma), found in Drosophila melanogaster (Fruit fly).